The chain runs to 411 residues: Secretion apparatus protein BsaZ (411 aa).

4 helical membrane passes run 28–48, 80–100, 137–157, and 175–195; these read IVAL…VDLT, IAAP…LVQS, ALLY…LYHA, and IVLT…VLIL. The tract at residues 341-411 is disordered; the sequence is AANRGGPPPE…APARTGDQNA (71 aa). Positions 370-404 are enriched in low complexity; it reads DACADNAFPDDAPPGAAAPNAGSPDSPAPDGGAPA.

This sequence belongs to the type III secretion exporter family.

It is found in the cell membrane. In terms of biological role, part of the bsa type III secretion system, is involved in the intracellular replication of invading bacteria inside the host cell. Probably necessary for the lysis of the vacuole membrane and escape into the host cell cytoplasm. The protein is Secretion apparatus protein BsaZ (bsaZ) of Burkholderia mallei (strain NCTC 10247).